Reading from the N-terminus, the 216-residue chain is Nudix hydrolase 26, chloroplastic (216 aa).

A chloroplast-targeting transit peptide spans 1 to 53 (MALYRPLLLHHPTSPSVTTFLRNYPSKPIKFSSLPFLHRCRKSRVSSSSARCC). The Nudix hydrolase domain occupies 62–209 (GYRRNVGVCL…KKPVYKEVMS (148 aa)). The short motif at 95-116 (GGIDEGEDPRVAVMRELKEETG) is the Nudix box element. Mn(2+) contacts are provided by Glu-110 and Glu-114.

This sequence belongs to the Nudix hydrolase family. Mg(2+) is required as a cofactor. Requires Mn(2+) as cofactor. As to expression, expressed in roots, leaves, stems and inflorescences.

The protein localises to the plastid. Its subcellular location is the chloroplast. Mediates the hydrolysis of some nucleoside diphosphate derivatives. Can use diadenosine 5',5'''-P(1)P(5) pentaphosphate (Ap(5)A), diadenosine 5',5'''-P(1)P(4) tetraphosphate (Ap(4)A) and diadenosine 5',5'''-P(1)P(3) triphosphate (Ap(3)A) as substrates. In Arabidopsis thaliana (Mouse-ear cress), this protein is Nudix hydrolase 26, chloroplastic (NUDT26).